A 258-amino-acid chain; its full sequence is Imidazole glycerol phosphate synthase subunit HisF (258 aa).

Active-site residues include D11 and D130.

It belongs to the HisA/HisF family. In terms of assembly, heterodimer of HisH and HisF.

The protein localises to the cytoplasm. It carries out the reaction 5-[(5-phospho-1-deoxy-D-ribulos-1-ylimino)methylamino]-1-(5-phospho-beta-D-ribosyl)imidazole-4-carboxamide + L-glutamine = D-erythro-1-(imidazol-4-yl)glycerol 3-phosphate + 5-amino-1-(5-phospho-beta-D-ribosyl)imidazole-4-carboxamide + L-glutamate + H(+). It functions in the pathway amino-acid biosynthesis; L-histidine biosynthesis; L-histidine from 5-phospho-alpha-D-ribose 1-diphosphate: step 5/9. In terms of biological role, IGPS catalyzes the conversion of PRFAR and glutamine to IGP, AICAR and glutamate. The HisF subunit catalyzes the cyclization activity that produces IGP and AICAR from PRFAR using the ammonia provided by the HisH subunit. This chain is Imidazole glycerol phosphate synthase subunit HisF, found in Yersinia pestis (strain Pestoides F).